Consider the following 237-residue polypeptide: Proteasome subunit alpha type-5-A (237 aa).

M1 bears the N-acetylmethionine mark. Glycyl lysine isopeptide (Lys-Gly) (interchain with G-Cter in ubiquitin) cross-links involve residues K43 and K66.

This sequence belongs to the peptidase T1A family. In terms of assembly, component of the 20S core complex of the 26S proteasome. The 26S proteasome is composed of a core protease (CP), known as the 20S proteasome, capped at one or both ends by the 19S regulatory particle (RP/PA700). The 20S proteasome core is composed of 28 subunits that are arranged in four stacked rings, resulting in a barrel-shaped structure. The two end rings are each formed by seven alpha subunits, and the two central rings are each formed by seven beta subunits. The catalytic chamber with the active sites is on the inside of the barrel.

The protein localises to the cytoplasm. The protein resides in the nucleus. The proteasome is a multicatalytic proteinase complex which is characterized by its ability to cleave peptides with Arg, Phe, Tyr, Leu, and Glu adjacent to the leaving group at neutral or slightly basic pH. The proteasome has an ATP-dependent proteolytic activity. The sequence is that of Proteasome subunit alpha type-5-A (PAE1) from Arabidopsis thaliana (Mouse-ear cress).